The primary structure comprises 302 residues: RNA polymerase sigma factor RpoH (302 aa).

A sigma-70 factor domain-2 region spans residues 57–126; sequence LVTSHLRLVA…IQEYILRSWS (70 aa). Residues 81 to 84 carry the Interaction with polymerase core subunit RpoC motif; sequence ELIS. Residues 235 to 286 form a sigma-70 factor domain-4 region; the sequence is AMDKLNDREKHILTERRLSDNPKTLEELSQVYGVSRERVRQIEVRAFDKLQK. A DNA-binding region (H-T-H motif) is located at residues 259-278; sequence LEELSQVYGVSRERVRQIEV.

This sequence belongs to the sigma-70 factor family. RpoH subfamily. In terms of assembly, interacts with the RNA polymerase core enzyme.

It localises to the cytoplasm. In terms of biological role, sigma factors are initiation factors that promote the attachment of RNA polymerase to specific initiation sites and are then released. This sigma factor is involved in regulation of expression of heat shock genes. In Zymomonas mobilis subsp. mobilis (strain ATCC 31821 / ZM4 / CP4), this protein is RNA polymerase sigma factor RpoH.